Consider the following 117-residue polypeptide: Large ribosomal subunit protein bL20 (117 aa).

This sequence belongs to the bacterial ribosomal protein bL20 family.

Functionally, binds directly to 23S ribosomal RNA and is necessary for the in vitro assembly process of the 50S ribosomal subunit. It is not involved in the protein synthesizing functions of that subunit. This is Large ribosomal subunit protein bL20 from Oleidesulfovibrio alaskensis (strain ATCC BAA-1058 / DSM 17464 / G20) (Desulfovibrio alaskensis).